The following is a 507-amino-acid chain: GMP synthase [glutamine-hydrolyzing] (507 aa).

One can recognise a Glutamine amidotransferase type-1 domain in the interval 4–193 (KIIILDFGSQ…VVDVCGCKQD (190 aa)). Catalysis depends on C79, which acts as the Nucleophile. Residues H167 and E169 contribute to the active site. The GMPS ATP-PPase domain occupies 194–382 (WSPASFIEST…LGMPEHLITR (189 aa)). 221–227 (SGGVDSS) lines the ATP pocket.

As to quaternary structure, homodimer.

The enzyme catalyses XMP + L-glutamine + ATP + H2O = GMP + L-glutamate + AMP + diphosphate + 2 H(+). It participates in purine metabolism; GMP biosynthesis; GMP from XMP (L-Gln route): step 1/1. Catalyzes the synthesis of GMP from XMP. The chain is GMP synthase [glutamine-hydrolyzing] from Bacteroides fragilis (strain ATCC 25285 / DSM 2151 / CCUG 4856 / JCM 11019 / LMG 10263 / NCTC 9343 / Onslow / VPI 2553 / EN-2).